Consider the following 423-residue polypeptide: Exodeoxyribonuclease 7 large subunit (423 aa).

Belongs to the XseA family. In terms of assembly, heterooligomer composed of large and small subunits.

The protein resides in the cytoplasm. It carries out the reaction Exonucleolytic cleavage in either 5'- to 3'- or 3'- to 5'-direction to yield nucleoside 5'-phosphates.. Bidirectionally degrades single-stranded DNA into large acid-insoluble oligonucleotides, which are then degraded further into small acid-soluble oligonucleotides. This Natranaerobius thermophilus (strain ATCC BAA-1301 / DSM 18059 / JW/NM-WN-LF) protein is Exodeoxyribonuclease 7 large subunit.